The primary structure comprises 198 residues: Probable GTP-binding protein EngB (198 aa).

The EngB-type G domain occupies 27–198 (DLPEVALAGR…ESWDTILSEL (172 aa)). Residues 35–42 (GRSNVGKS), 62–66 (GKTQL), 80–83 (DVPG), 147–150 (TKAD), and 179–181 (FSS) each bind GTP. Mg(2+)-binding residues include serine 42 and threonine 64.

This sequence belongs to the TRAFAC class TrmE-Era-EngA-EngB-Septin-like GTPase superfamily. EngB GTPase family. Requires Mg(2+) as cofactor.

Necessary for normal cell division and for the maintenance of normal septation. This chain is Probable GTP-binding protein EngB, found in Streptococcus agalactiae serotype Ia (strain ATCC 27591 / A909 / CDC SS700).